The primary structure comprises 1262 residues: MANPFLMDEDLDGCDAAANPFLMQSEPEPSSDNPFMAATVASNPFAFGADDLELGAEPEAEATHDNDLDPAMSFFGTTIEAEDDTLSLKSGAEEEDEGKKPPQSQPQLQSHAHPHPPPPRPLVPPQSTQDLISTVSSQLDETSSELLGRIPATRSPSPVSMRDLHSPSPTPDSGLADLLDVSVDSGSSAHTQGIEADLISGVAGGVRLDNPFAVPTAVPNIQAAVPLPATPIKQPPRPPPPRPAPPRPAPPGQAAPQRPPPPLAAVNPPPAAPEADDLLDMFGTTACKPAKPPPPKSKEDILSLFEQPHVPLSQPASKPDLLHDDLDETIGEGEPPEQEEPDTEQSNEISSRDEPVFTSLLIRPDESTHDITSQPQAATGLERQVNNMAAPSGTASTQRATTPDIEITTVEDLPRSDDEDEPEAMQEPETETKPQIEPDTEPEIVSEHSPPTERLVTQAALVDGELIAAEPEPEEMDTGLDFPLASSGQLSANPFASPDEEEPNFAPMPAAVANIFAVNDPDSQMETPKAPSHTANIFASDPDEFDAFSAKFDSVKKDNISIMDGFGGSGAITPTGGDAWGGSAFGSTTISANACGDTNSADDGFGNDDDDFYAMQAPARADSVESVDKDFSVVIRPMAEETSGVAPQLAPPPPPARGVNQAQTTSLPGLTVNPFEDVSGFPAPGLPPTDGTAIKRTDSQDTPQTPLYDEDVSQPLEEFPRLHYIGPGWEMQLRQPNKKKITGQRFWKKIVVRLVVQNDVPVVQLLNQAGDKQPFQELPLQPSYSVSEIGAQQYDQFGKIFTMKLQYIFYKERPGVRPGQVTKAERITNKLTKFAQYAIAGDYEGVKEFGSDLKKLGLPVEHAPQSSQLFKIGSMNYEDMKQFSVCIEEALFKIPALRERALTYKMEEVQVTAVDEITVEQDFEGKILKQIARVRLFFLAFLTGMPTIELGVNDMWRQGKEVVGRHDIIPVATEEWIRLEAVEFHSVVNQKEYERTRTIKFQPPDANYIELLRFRVRPPKNRELPLQLKATWCVSGNKVELRADILVPGFTSRKLGQIPCEDVSVRFPIPECWIYLFRVEKHFRYGSVKSAHRRTGKIKGIERILGAVDTLQESLIEVTSGQAKYEHHHRAIVWRCPRLPKEGQGAYTTHQLVCRMALTSYDQIPSELAPYAFVEFTMPATQVSHTTVRSVSVQDSDGDEPPEKYVRYLARHEYKVGIETTHGESTNAYLAATRPIREEPPTTATKPTASPVAPSDSDTDSN.

4 short sequence motifs (NPF) span residues 3-5 (NPF), 19-21 (NPF), 33-35 (NPF), and 43-45 (NPF). The disordered stretch occupies residues 17 to 36 (AANPFLMQSEPEPSSDNPFM). Residues 49-189 (ADDLELGAEP…DVSVDSGSSA (141 aa)) are disordered. The segment covering 50 to 60 (DDLELGAEPEA) has biased composition (acidic residues). A compositionally biased stretch (low complexity) spans 101-111 (PPQSQPQLQSH). Residues 115–124 (HPPPPRPLVP) are compositionally biased toward pro residues. The segment covering 128–145 (TQDLISTVSSQLDETSSE) has biased composition (polar residues). Positions 172–189 (DSGLADLLDVSVDSGSSA) are enriched in low complexity. Residues 210–212 (NPF) carry the NPF 5 motif. 2 disordered regions span residues 225-452 (VPLP…SPPT) and 474-507 (EEMDTGLDFPLASSGQLSANPFASPDEEEPNFAP). Residues 233–272 (KQPPRPPPPRPAPPRPAPPGQAAPQRPPPPLAAVNPPPAA) show a composition bias toward pro residues. Residues 325–345 (DLDETIGEGEPPEQEEPDTEQ) are compositionally biased toward acidic residues. Residues 384-401 (QVNNMAAPSGTASTQRAT) show a composition bias toward polar residues. Positions 417–429 (DDEDEPEAMQEPE) are enriched in acidic residues. An NPF 6 motif is present at residues 493 to 495 (NPF). 2 positions are modified to phosphoserine: Ser623 and Ser626. The tract at residues 643-709 (SGVAPQLAPP…QDTPQTPLYD (67 aa)) is disordered. Positions 673-675 (NPF) match the NPF 7 motif. Residues 728 to 902 (GWEMQLRQPN…KIPALRERAL (175 aa)) enclose the SHD domain. Residues 847 to 1108 (KEFGSDLKKL…KGIERILGAV (262 aa)) are interaction with Syt. Residues 906-1219 (MEEVQVTAVD…ARHEYKVGIE (314 aa)) enclose the MHD domain. The disordered stretch occupies residues 1226 to 1262 (TNAYLAATRPIREEPPTTATKPTASPVAPSDSDTDSN). The segment covering 1241 to 1254 (PTTATKPTASPVAP) has biased composition (low complexity).

Belongs to the Stoned B family. Interacts with the second C2 domain of Syt.

The protein localises to the cytoplasm. It is found in the synapse. Its function is as follows. Adapter protein involved in endocytic recycling of synaptic vesicles membranes. May act by mediating the retrieval of synaptotagmin protein Syt from the plasma membrane, thereby facilitating the internalization of multiple synaptic vesicles from the plasma membrane. This chain is Protein stoned-B (stnB), found in Drosophila melanogaster (Fruit fly).